The primary structure comprises 453 residues: Bifunctional protein GlmU (453 aa).

The interval 1–225 (MNIVILAAGT…DWETLGVNSK (225 aa)) is pyrophosphorylase. UDP-N-acetyl-alpha-D-glucosamine is bound by residues 6-9 (LAAG), Lys-20, Gln-71, 76-77 (GT), 98-100 (YGD), Gly-135, Glu-150, Asn-165, and Asn-223. Asp-100 contacts Mg(2+). Asn-223 is a binding site for Mg(2+). Positions 226 to 246 (AQLAELERIHQRNVADALLVE) are linker. The segment at 247–453 (GVTLADPARV…GYVRPVKKKS (207 aa)) is N-acetyltransferase. Arg-329 and Lys-347 together coordinate UDP-N-acetyl-alpha-D-glucosamine. The active-site Proton acceptor is the His-359. UDP-N-acetyl-alpha-D-glucosamine contacts are provided by Tyr-362 and Asn-373. Acetyl-CoA contacts are provided by residues Ala-376, 382 to 383 (NY), Ser-401, and Ala-419.

This sequence in the N-terminal section; belongs to the N-acetylglucosamine-1-phosphate uridyltransferase family. It in the C-terminal section; belongs to the transferase hexapeptide repeat family. Homotrimer. Mg(2+) is required as a cofactor.

Its subcellular location is the cytoplasm. It carries out the reaction alpha-D-glucosamine 1-phosphate + acetyl-CoA = N-acetyl-alpha-D-glucosamine 1-phosphate + CoA + H(+). The enzyme catalyses N-acetyl-alpha-D-glucosamine 1-phosphate + UTP + H(+) = UDP-N-acetyl-alpha-D-glucosamine + diphosphate. It participates in nucleotide-sugar biosynthesis; UDP-N-acetyl-alpha-D-glucosamine biosynthesis; N-acetyl-alpha-D-glucosamine 1-phosphate from alpha-D-glucosamine 6-phosphate (route II): step 2/2. It functions in the pathway nucleotide-sugar biosynthesis; UDP-N-acetyl-alpha-D-glucosamine biosynthesis; UDP-N-acetyl-alpha-D-glucosamine from N-acetyl-alpha-D-glucosamine 1-phosphate: step 1/1. Its pathway is bacterial outer membrane biogenesis; LPS lipid A biosynthesis. Its function is as follows. Catalyzes the last two sequential reactions in the de novo biosynthetic pathway for UDP-N-acetylglucosamine (UDP-GlcNAc). The C-terminal domain catalyzes the transfer of acetyl group from acetyl coenzyme A to glucosamine-1-phosphate (GlcN-1-P) to produce N-acetylglucosamine-1-phosphate (GlcNAc-1-P), which is converted into UDP-GlcNAc by the transfer of uridine 5-monophosphate (from uridine 5-triphosphate), a reaction catalyzed by the N-terminal domain. This Burkholderia vietnamiensis (strain G4 / LMG 22486) (Burkholderia cepacia (strain R1808)) protein is Bifunctional protein GlmU.